Here is a 200-residue protein sequence, read N- to C-terminus: Integrin beta-1-binding protein 1 (200 aa).

Residues 1–10 (MFRKGKKRHS) are compositionally biased toward basic residues. Positions 1-55 (MFRKGKKRHSSSSSQSSEISTKSKSVDSSLGGLSRSSTVASLDTDSTKSSGQSNS) are disordered. A Nuclear localization signal motif is present at residues 6 to 7 (KK). Residues 11–29 (SSSSQSSEISTKSKSVDSS) show a composition bias toward low complexity. Positions 34-55 (SRSSTVASLDTDSTKSSGQSNS) are enriched in polar residues. Residue T38 is modified to Phosphothreonine; by CaMK2. At S41 the chain carries Phosphoserine. Positions 58-200 (DTCAEFRIKY…FDSVLTSDKS (143 aa)) constitute a PID domain. Positions 136–139 (YLII) are interaction with KRIT1. Residues 139 to 141 (IRM) are interaction with ITGB1.

In terms of assembly, found in a complex, at least composed of ITGB1BP1, KRIT1 and RAP1A. Interacts (via C-terminal region) with ITGB1 (via C-terminal cytoplasmic tail); the interaction prevents talin TLN1 binding to ITGB1 and KRIT1 and ITGB1 compete for the same binding site. Interacts with KRIT1 (via N-terminal NPXY motif); the interaction induces the opening conformation of KRIT1 and KRIT1 and ITGB1 compete for the same binding site. Isoform 2 does not interact with ITGB1. Interacts with CDC42 (GTP- or GDP-bound form); the interaction is increased with the CDC42-membrane bound forms and prevents both CDC42 activation and cell spreading. Interacts (via C-terminal domain region) with NME2. Interacts with FERMT2 and RAC1. Interacts (via N-terminus and PTB domain) with ROCK1. Phosphorylation at Thr-38 seems to enhance integrin alpha5beta1-mediated cell adhesion. The degree of phosphorylation is regulated by integrin-dependent cell-matrix interaction. As to expression, expressed in the brain.

The protein resides in the nucleus. Its subcellular location is the cytoplasm. The protein localises to the cytoskeleton. It is found in the cell membrane. It localises to the cell projection. The protein resides in the lamellipodium. Its subcellular location is the ruffle. Key regulator of the integrin-mediated cell-matrix interaction signaling by binding to the ITGB1 cytoplasmic tail and preventing the activation of integrin alpha-5/beta-1 (heterodimer of ITGA5 and ITGB1) by talin or FERMT1. Plays a role in cell proliferation, differentiation, spreading, adhesion and migration in the context of mineralization and bone development and angiogenesis. Stimulates cellular proliferation in a fibronectin-dependent manner. Involved in the regulation of beta-1 integrin-containing focal adhesion (FA) site dynamics by controlling its assembly rate during cell adhesion; inhibits beta-1 integrin clustering within FA by directly competing with talin TLN1, and hence stimulates osteoblast spreading and migration in a fibronectin- and/or collagen-dependent manner. Acts as a guanine nucleotide dissociation inhibitor (GDI) by regulating Rho family GTPases during integrin-mediated cell matrix adhesion; reduces the level of active GTP-bound form of both CDC42 and RAC1 GTPases upon cell adhesion to fibronectin. Stimulates the release of active CDC42 from the membranes to maintain it in an inactive cytoplasmic pool. Participates in the translocation of the Rho-associated protein kinase ROCK1 to membrane ruffles at cell leading edges of the cell membrane, leading to an increase of myoblast cell migration on laminin. Plays a role in bone mineralization at a late stage of osteoblast differentiation; modulates the dynamic formation of focal adhesions into fibrillar adhesions, which are adhesive structures responsible for fibronectin deposition and fibrillogenesis. Plays a role in blood vessel development; acts as a negative regulator of angiogenesis by attenuating endothelial cell proliferation and migration, lumen formation and sprouting angiogenesis by promoting AKT phosphorylation and inhibiting ERK1/2 phosphorylation through activation of the Notch signaling pathway. Promotes transcriptional activity of the MYC promoter. This Mus musculus (Mouse) protein is Integrin beta-1-binding protein 1 (Itgb1bp1).